Consider the following 287-residue polypeptide: Lycopene elongase/hydratase (287 aa).

Transmembrane regions (helical) follow at residues 15-35 (ISWI…AGEI), 37-57 (WLFW…MYGI), 87-107 (TLLW…FIFG), 137-157 (FIDA…GATI), 166-186 (MWIA…LGAV), 218-238 (LLAA…GIAI), and 265-285 (VFLW…IAIH).

Belongs to the UbiA prenyltransferase family.

It is found in the cell membrane. It catalyses the reaction all-trans-lycopene + dimethylallyl diphosphate + A + H2O = nonaflavuxanthin + AH2 + diphosphate. The enzyme catalyses nonaflavuxanthin + dimethylallyl diphosphate + A + H2O = flavuxanthin + AH2 + diphosphate. It functions in the pathway carotenoid biosynthesis. In terms of biological role, catalyzes the elongation of the C(40) carotenoid all-trans-lycopene to the acyclic C(50) carotenoid flavuxanthin during decaprenoxanthin biosynthesis. Acts as a bifunctional enzyme that catalyzes the elongation of lycopene by attaching a C(5) isoprene unit at C-2, as well as the hydroxylation of the new isoprene unit. The enzyme acts at both ends of the substrate, forming the C(50) carotenoid flavuxanthin via the C(45) intermediate nonaflavuxanthin. This is Lycopene elongase/hydratase from Corynebacterium glutamicum (strain ATCC 13032 / DSM 20300 / JCM 1318 / BCRC 11384 / CCUG 27702 / LMG 3730 / NBRC 12168 / NCIMB 10025 / NRRL B-2784 / 534).